The sequence spans 213 residues: ATP phosphoribosyltransferase (213 aa).

It belongs to the ATP phosphoribosyltransferase family. Short subfamily. As to quaternary structure, heteromultimer composed of HisG and HisZ subunits.

Its subcellular location is the cytoplasm. It carries out the reaction 1-(5-phospho-beta-D-ribosyl)-ATP + diphosphate = 5-phospho-alpha-D-ribose 1-diphosphate + ATP. It functions in the pathway amino-acid biosynthesis; L-histidine biosynthesis; L-histidine from 5-phospho-alpha-D-ribose 1-diphosphate: step 1/9. Its function is as follows. Catalyzes the condensation of ATP and 5-phosphoribose 1-diphosphate to form N'-(5'-phosphoribosyl)-ATP (PR-ATP). Has a crucial role in the pathway because the rate of histidine biosynthesis seems to be controlled primarily by regulation of HisG enzymatic activity. The sequence is that of ATP phosphoribosyltransferase from Thermoanaerobacter pseudethanolicus (strain ATCC 33223 / 39E) (Clostridium thermohydrosulfuricum).